The chain runs to 271 residues: Cobalt import ATP-binding protein CbiO (271 aa).

An ABC transporter domain is found at 2–236 (LATSDLWFRY…TEAMEHAGLT (235 aa)). 34 to 41 (GANGCGKS) is an ATP binding site.

It belongs to the ABC transporter superfamily. Cobalt importer (TC 3.A.1.18.1) family. Forms an energy-coupling factor (ECF) transporter complex composed of an ATP-binding protein (A component, CbiO), a transmembrane protein (T component, CbiQ) and 2 possible substrate-capture proteins (S components, CbiM and CbiN) of unknown stoichimetry.

The protein localises to the cell inner membrane. Its pathway is cofactor biosynthesis; adenosylcobalamin biosynthesis. In terms of biological role, part of the energy-coupling factor (ECF) transporter complex CbiMNOQ involved in cobalt import. Presumably responsible for energy coupling to the transport system. The polypeptide is Cobalt import ATP-binding protein CbiO (Salmonella paratyphi A (strain ATCC 9150 / SARB42)).